We begin with the raw amino-acid sequence, 388 residues long: Succinate--CoA ligase [ADP-forming] subunit beta (388 aa).

The 236-residue stretch at 9–244 (KGILSGFDVR…PHEYSEEELE (236 aa)) folds into the ATP-grasp domain. ATP is bound by residues lysine 46, 53–55 (GRG), glutamate 99, valine 102, and glutamate 107. Positions 199 and 213 each coordinate Mg(2+). Residues asparagine 264 and 320–322 (GIM) each bind substrate.

This sequence belongs to the succinate/malate CoA ligase beta subunit family. In terms of assembly, heterotetramer of two alpha and two beta subunits. Mg(2+) is required as a cofactor.

It catalyses the reaction succinate + ATP + CoA = succinyl-CoA + ADP + phosphate. The catalysed reaction is GTP + succinate + CoA = succinyl-CoA + GDP + phosphate. Its pathway is carbohydrate metabolism; tricarboxylic acid cycle; succinate from succinyl-CoA (ligase route): step 1/1. In terms of biological role, succinyl-CoA synthetase functions in the citric acid cycle (TCA), coupling the hydrolysis of succinyl-CoA to the synthesis of either ATP or GTP and thus represents the only step of substrate-level phosphorylation in the TCA. The beta subunit provides nucleotide specificity of the enzyme and binds the substrate succinate, while the binding sites for coenzyme A and phosphate are found in the alpha subunit. This Anaplasma phagocytophilum (strain HZ) protein is Succinate--CoA ligase [ADP-forming] subunit beta.